The chain runs to 496 residues: Cytochrome P450 71D181 (496 aa).

A helical; Signal-anchor for type II membrane protein transmembrane segment spans residues 1–21 (MDISILWVAIILVISSYFIFM). A heme-binding site is contributed by C435. Residues 471–496 (MSETPGLSGPRKNPLIMVPTIHNPTS) form a disordered region.

Belongs to the cytochrome P450 family. Requires heme as cofactor.

The protein localises to the membrane. The enzyme catalyses gamma-terpinene + 2 reduced [NADPH--hemoprotein reductase] + 2 O2 = carvacrol + 2 oxidized [NADPH--hemoprotein reductase] + 3 H2O + 2 H(+). The catalysed reaction is (4S)-limonene + reduced [NADPH--hemoprotein reductase] + O2 = (1S,5R)-carveol + oxidized [NADPH--hemoprotein reductase] + H2O + H(+). It catalyses the reaction (4R)-limonene + reduced [NADPH--hemoprotein reductase] + O2 = (1R,5S)-carveol + oxidized [NADPH--hemoprotein reductase] + H2O + H(+). It carries out the reaction alpha-terpinene + 2 reduced [NADPH--hemoprotein reductase] + 2 O2 = carvacrol + 2 oxidized [NADPH--hemoprotein reductase] + 3 H2O + 2 H(+). The protein operates within secondary metabolite biosynthesis; terpenoid biosynthesis. In terms of biological role, involved in the biosynthesis of phenolic monoterpenes natural products thymol and carvacrol which have a broad range of biological activities acting as antimicrobial compounds, insecticides, antioxidants and pharmaceutical agents. Catalyzes the C2-hydroxylation of gamma-terpinene and alpha-terpinene to produce carvacrol. Also mediates the C6-hydroxylation of (4S)-limonene and (4R)-limonene to form carveol. This is Cytochrome P450 71D181 from Thymus vulgaris (Thyme).